The chain runs to 66 residues: Beta-toxin Cbo2 (66 aa).

An LCN-type CS-alpha/beta domain is found at 1-66 (KEGYIVNYHD…VWPLPKKTCN (66 aa)). Intrachain disulfides connect Cys12–Cys65, Cys16–Cys41, Cys25–Cys46, and Cys29–Cys48. At Asn66 the chain carries Asparagine amide.

Belongs to the long (4 C-C) scorpion toxin superfamily. Sodium channel inhibitor family. Beta subfamily. In terms of tissue distribution, expressed by the venom gland.

Its subcellular location is the secreted. In terms of biological role, beta toxins bind voltage-independently at site-4 of sodium channels and shift the voltage of activation toward more negative potentials thereby affecting sodium channel activation and promoting spontaneous and repetitive firing. A mixture of Cbo2 and Cbo3 is weakly active on the human voltage-gated sodium channels Nav1.4/SCN4A and Nav1.6/SCN8A when tested at 200 nM. In vivo, is toxic to mice when intraperitoneally injected. The polypeptide is Beta-toxin Cbo2 (Centruroides bonito (Scorpion)).